The primary structure comprises 369 residues: DNA replication and repair protein RecF (369 aa).

Position 30–37 (30–37) interacts with ATP; it reads GDNAQGKT.

The protein belongs to the RecF family.

The protein localises to the cytoplasm. Its function is as follows. The RecF protein is involved in DNA metabolism; it is required for DNA replication and normal SOS inducibility. RecF binds preferentially to single-stranded, linear DNA. It also seems to bind ATP. The protein is DNA replication and repair protein RecF of Streptococcus equi subsp. equi (strain 4047).